The primary structure comprises 293 residues: Bifunctional protein FolD (293 aa).

NADP(+)-binding positions include 162 to 164 (GQS) and Ile227.

The protein belongs to the tetrahydrofolate dehydrogenase/cyclohydrolase family. As to quaternary structure, homodimer.

The catalysed reaction is (6R)-5,10-methylene-5,6,7,8-tetrahydrofolate + NADP(+) = (6R)-5,10-methenyltetrahydrofolate + NADPH. It catalyses the reaction (6R)-5,10-methenyltetrahydrofolate + H2O = (6R)-10-formyltetrahydrofolate + H(+). It participates in one-carbon metabolism; tetrahydrofolate interconversion. Its function is as follows. Catalyzes the oxidation of 5,10-methylenetetrahydrofolate to 5,10-methenyltetrahydrofolate and then the hydrolysis of 5,10-methenyltetrahydrofolate to 10-formyltetrahydrofolate. This Metamycoplasma arthritidis (strain 158L3-1) (Mycoplasma arthritidis) protein is Bifunctional protein FolD.